A 617-amino-acid polypeptide reads, in one-letter code: Phosphatidylinositol-3,5-bisphosphate 3-phosphatase MTMR6 (617 aa).

In terms of domain architecture, GRAM spans 1 to 101; the sequence is MEHIRTTKVE…YNSLLQLSKQ (101 aa). Residues 2–141 are interaction with RAB1B; it reads EHIRTTKVEQ…AEYERMGVPN (140 aa). The residue at position 108 (Tyr108) is a Phosphotyrosine. The Myotubularin phosphatase domain maps to 124–499; sequence GWQLIDLAAE…FNFKFWRNMY (376 aa). A 1,2-diacyl-sn-glycero-3-phospho-(1D-myo-inositol-3,5-bisphosphate) is bound by residues Asn248, Asn273, and Ile274. Residues Asn248, Asn273, and Ile274 each contribute to the a 1,2-diacyl-sn-glycero-3-phospho-(1D-myo-inositol-3-phosphate) site. Catalysis depends on Cys336, which acts as the Phosphocysteine intermediate. Residues Ser337, Asp338, Gly339, Trp340, Asp341, Arg342, Lys378, and Arg382 each contribute to the a 1,2-diacyl-sn-glycero-3-phospho-(1D-myo-inositol-3,5-bisphosphate) site. Ser337, Asp338, Gly339, Trp340, Asp341, and Arg342 together coordinate a 1,2-diacyl-sn-glycero-3-phospho-(1D-myo-inositol-3-phosphate). An a 1,2-diacyl-sn-glycero-3-phospho-(1D-myo-inositol-3-phosphate)-binding site is contributed by Arg382. Phosphoserine occurs at positions 557, 585, and 607.

Belongs to the protein-tyrosine phosphatase family. Non-receptor class myotubularin subfamily. In terms of assembly, homodimer. Heterodimer (via C-terminus) with MTMR9 (via C-terminus). Interacts with ALKBH4. Interacts with KCNN4. Interacts (via GRAM domain) with RAB1B (in GDP-bound form); the interaction regulates MTMR6 recruitment to the endoplasmic reticulum-Golgi intermediate compartment. In terms of tissue distribution, isoform 1: Ubiquitously expressed including in heart, brain, spleen, lung, liver, muscle, kidney and testis (at protein level). Isoform 2: Expressed in testis (at protein level).

The protein resides in the cytoplasm. The protein localises to the endoplasmic reticulum-Golgi intermediate compartment. It localises to the cell projection. Its subcellular location is the ruffle membrane. It is found in the endoplasmic reticulum. It carries out the reaction a 1,2-diacyl-sn-glycero-3-phospho-(1D-myo-inositol-3,5-bisphosphate) + H2O = a 1,2-diacyl-sn-glycero-3-phospho-(1D-myo-inositol-5-phosphate) + phosphate. It catalyses the reaction a 1,2-diacyl-sn-glycero-3-phospho-(1D-myo-inositol-3-phosphate) + H2O = a 1,2-diacyl-sn-glycero-3-phospho-(1D-myo-inositol) + phosphate. The catalysed reaction is 1,2-dioctanoyl-sn-glycero-3-phospho-(1D-myo-inositol-3,5-bisphosphate) + H2O = 1,2-dioctanoyl-sn-glycero-3-phospho-(1D-myo-inositol-5-phosphate) + phosphate. The enzyme catalyses 1,2-dioctanoyl-sn-glycero-3-phospho-(1-D-myo-inositol-3-phosphate) + H2O = 1,2-dioctanoyl-sn-glycero-3-phospho-(1D-myo-inositol) + phosphate. Allosterically activated by phosphatidylserine and/or phosphatidylinositol 4-phosphate (PtdIns(4)P), and phosphatidylinositol 5-phosphate (PtdIns(5)P). Interaction with MTMR9 increases catalytic activity towards phosphatidylinositol 3,5-bisphosphate. Its function is as follows. Lipid phosphatase that specifically dephosphorylates the D-3 position of phosphatidylinositol 3-phosphate and phosphatidylinositol 3,5-bisphosphate, generating phosphatidylinositol and phosphatidylinositol 5-phosphate. Binds with high affinity to phosphatidylinositol 3,5-bisphosphate (PtdIns(3,5)P2) but also to phosphatidylinositol 3-phosphate (PtdIns(3)P), phosphatidylinositol 4-phosphate (PtdIns(4)P), and phosphatidylinositol 5-phosphate (PtdIns(5)P), phosphatidic acid and phosphatidylserine. Negatively regulates ER-Golgi protein transport. Probably in association with MTMR9, plays a role in the late stages of macropinocytosis by dephosphorylating phosphatidylinositol 3-phosphate in membrane ruffles. Acts as a negative regulator of KCNN4/KCa3.1 channel activity in CD4(+) T-cells possibly by decreasing intracellular levels of phosphatidylinositol 3-phosphate. Negatively regulates proliferation of reactivated CD4(+) T-cells. In complex with MTMR9, negatively regulates DNA damage-induced apoptosis. The formation of the MTMR6-MTMR9 complex stabilizes both MTMR6 and MTMR9 protein levels. The protein is Phosphatidylinositol-3,5-bisphosphate 3-phosphatase MTMR6 of Mus musculus (Mouse).